We begin with the raw amino-acid sequence, 274 residues long: Large ribosomal subunit protein uL2cz/uL2cy (274 aa).

Disordered stretches follow at residues 1-22 (MAIHLYKTSTPSTRNGAVDSQV) and 223-274 (MNPV…RRTK).

Belongs to the universal ribosomal protein uL2 family. As to quaternary structure, part of the 50S ribosomal subunit.

Its subcellular location is the plastid. It localises to the chloroplast. The chain is Large ribosomal subunit protein uL2cz/uL2cy (rpl2-A) from Phaseolus vulgaris (Kidney bean).